The primary structure comprises 1214 residues: Inner capsid protein VP3 (1214 aa).

Residues M1–T80 are disordered. The segment covering K8 to D18 has biased composition (polar residues). Positions P28–A51 are enriched in low complexity. The C2H2-type zinc-finger motif lies at Y117–H140.

Belongs to the turreted BTV-fold inner capsid family. Homodecamer; each decamer is made up of two conformers of VP2, called VP2A and VP2B. 12 homodecamers assemble to form an icosahedral capsid. Interacts with VP6.

The protein localises to the virion. Inner capsid protein that self-assembles to form an icosahedral capsid with a T=2 symmetry, which consists of 120 copies of VP2, with channels at each of its five-fold vertices. This capsid constitutes the innermost concentric layer of the viral mature particle. In Notemigonus crysoleucas (Golden shiner), this protein is Inner capsid protein VP3 (S3).